Consider the following 359-residue polypeptide: Peptide chain release factor 1 (359 aa).

N5-methylglutamine is present on Q235.

Belongs to the prokaryotic/mitochondrial release factor family. Methylated by PrmC. Methylation increases the termination efficiency of RF1.

It localises to the cytoplasm. In terms of biological role, peptide chain release factor 1 directs the termination of translation in response to the peptide chain termination codons UAG and UAA. This is Peptide chain release factor 1 from Aromatoleum aromaticum (strain DSM 19018 / LMG 30748 / EbN1) (Azoarcus sp. (strain EbN1)).